Consider the following 594-residue polypeptide: (-)-endo-fenchol synthase, chloroplastic (594 aa).

The transit peptide at 1–50 directs the protein to the chloroplast; that stretch reads MSSLVMHVGIVNKPAITYLPTLSRSASNLHNVSSTRLQTSCSLQLDYKPV. Mg(2+) is bound by residues Asp348, Asp352, Asp492, and Glu500. Positions 348 to 352 match the DDXXD motif motif; it reads DDIYD.

It belongs to the terpene synthase family. Tpsa subfamily. Mg(2+) serves as cofactor. Mn(2+) is required as a cofactor. Expressed at high levels in leaves.

Its subcellular location is the plastid. The protein resides in the chloroplast. It catalyses the reaction (2E)-geranyl diphosphate = alpha-pinene + diphosphate. The enzyme catalyses (2E)-geranyl diphosphate + H2O = (1S,2S,4R)-endo-fenchol + diphosphate. The catalysed reaction is (2E)-geranyl diphosphate = limonene + diphosphate. Its pathway is secondary metabolite biosynthesis; terpenoid biosynthesis. In terms of biological role, monoterpene synthase involved in the biosynthesis of volatile compounds widely used in aromatherapy and folk medicine, and present in culinary herbs. Mediates the conversion of (2E)-geranyl diphosphate (GPP) into alpha fenchol, limonene and alpha-pinene and, as minor compounds, into beta-myrcene, alpha-terpinolene and alpha-phellandrene. In Lavandula pedunculata subsp. lusitanica (French lavender), this protein is (-)-endo-fenchol synthase, chloroplastic.